The sequence spans 547 residues: MAKIIAFDEEARRGLEKGLNTLADAVKVTLGPKGRNVVLEKAWGAPTITNDGVTIAREIELEDPYEKIGAELVKEVAKKTDDVAGDGTTTATVLAQALVKEGLRNVAAGSNPMGIKRGIEQAVATVTEKLLESAKEVETEEQIAATAGISAADPAIGAQIAKAMYAVGGGKLNKDSVITVEESNTFGVELEVTEGMRFDKGYISGYFATDMERLEAVLEDPYILLVSGKISNIKDLLPLLEKVMQSGKPLLIIAEDVEGEALSTLVVNKIRGTFKSVAVKAPGFGDRRKAQLQDIAILTGGQVISEEVGLSLETADLPLLGQARKVVVTKDDTTIVDGAGSEEQIEGRVNQIRAEIENSDSDYDREKLNERLAKLAGGVAVLKVGAATEVELKERKHRIEDAVRNAKAAVEEGIVAGGGVALIQAAHVLDNDLDLTGDEATGVRIVRDALTAPLKQIAANAGLEPGVVADKVSRLPEGEGLNAATGEYVDLMAAGINDPVKVTRSALQNAASIAALFLTTEAVVADKPQPAGAAMPGADEMGGMGGF.

Residues 29-32 (TLGP), 86-90 (DGTTT), glycine 418, 482-484 (NAA), and aspartate 498 contribute to the ATP site.

It belongs to the chaperonin (HSP60) family. Forms a cylinder of 14 subunits composed of two heptameric rings stacked back-to-back. Interacts with the co-chaperonin GroES.

It is found in the cytoplasm. It catalyses the reaction ATP + H2O + a folded polypeptide = ADP + phosphate + an unfolded polypeptide.. In terms of biological role, together with its co-chaperonin GroES, plays an essential role in assisting protein folding. The GroEL-GroES system forms a nano-cage that allows encapsulation of the non-native substrate proteins and provides a physical environment optimized to promote and accelerate protein folding. This chain is Chaperonin GroEL 2, found in Corynebacterium efficiens (strain DSM 44549 / YS-314 / AJ 12310 / JCM 11189 / NBRC 100395).